The sequence spans 416 residues: Enolase (416 aa).

Residue Gln162 participates in (2R)-2-phosphoglycerate binding. Glu204 functions as the Proton donor in the catalytic mechanism. The Mg(2+) site is built by Asp241, Glu282, and Asp309. 4 residues coordinate (2R)-2-phosphoglycerate: Lys334, Arg363, Ser364, and Lys385. The active-site Proton acceptor is the Lys334.

Belongs to the enolase family. Requires Mg(2+) as cofactor.

It localises to the cytoplasm. The protein localises to the secreted. Its subcellular location is the cell surface. It catalyses the reaction (2R)-2-phosphoglycerate = phosphoenolpyruvate + H2O. It functions in the pathway carbohydrate degradation; glycolysis; pyruvate from D-glyceraldehyde 3-phosphate: step 4/5. Functionally, catalyzes the reversible conversion of 2-phosphoglycerate (2-PG) into phosphoenolpyruvate (PEP). It is essential for the degradation of carbohydrates via glycolysis. This chain is Enolase, found in Campylobacter concisus (strain 13826).